Reading from the N-terminus, the 900-residue chain is Suppressor of activated egl-4 protein 1 (900 aa).

Disordered regions lie at residues 1–75 (MPPP…HLPT), 340–380 (PVAE…SRKN), and 406–425 (WASTSSADEKMQTERKESLE). The segment covering 53–75 (ASGQQHRPSIMSGQSHQNNHLPT) has biased composition (polar residues). 2 stretches are compositionally biased toward basic and acidic residues: residues 358–377 (GDMKHLMNGKKRSEDGDGPS) and 412–425 (ADEKMQTERKESLE). In terms of domain architecture, ELM2 spans 451-544 (PHINLGKNYQ…AAVEDLLRSD (94 aa)). The SANT domain maps to 560–611 (NDSVLWTPDEIYQFQDAIYQSEKDFDKVAVELPGKSVKECVQFYYTWKKDCP). A disordered region spans residues 710–729 (PTAPRAHHTPSASASKKGAQ). The segment at 736-758 (FHCRLCDKCFEKVKSLNAHMKSH) adopts a C2H2-type zinc-finger fold.

In terms of assembly, may be a component of a histone deacetylase complex containing saeg-2, saeg-1 and hda-2. May interact with egl-4. Ubiquitously expressed.

The protein localises to the nucleus. Its function is as follows. As a likely component of a histone deacetylase complex, together with saeg-2 and hda-2, functions downstream of the cAMP-dependent kinase egl-4 to regulate the expression of genes required for egg-laying and foraging. In Caenorhabditis elegans, this protein is Suppressor of activated egl-4 protein 1.